The primary structure comprises 58 residues: Large ribosomal subunit protein uL30 (58 aa).

Belongs to the universal ribosomal protein uL30 family. In terms of assembly, part of the 50S ribosomal subunit.

This Pseudomonas savastanoi pv. phaseolicola (strain 1448A / Race 6) (Pseudomonas syringae pv. phaseolicola (strain 1448A / Race 6)) protein is Large ribosomal subunit protein uL30.